A 590-amino-acid chain; its full sequence is MLAVVGAAALVLVAGAPWVLPSAAGGENLKPPENIDVYIIDDNYTLKWSSHGESMGSVTFSAEYRTKDEAKWLKVPECQHTTTTKCEFSLLDTNVYIKTQFRVRAEEGNSTSSWNEVDPFIPFYTAHMSPPEVRLEAEDKAILVHISPPGQDGNMWALEKPSFSYTIRIWQKSSSDKKTINSTYYVEKIPELLPETTYCLEVKAIHPSLKKHSNYSTVQCISTTVANKMPVPGNLQVDAQGKSYVLKWDYIASADVLFRAQWLPGYSKSSSGSRSDKWKPIPTCANVQTTHCVFSQDTVYTGTFFLHVQASEGNHTSFWSEEKFIDSQKHILPPPPVITVTAMSDTLLVYVNCQDSTCDGLNYEIIFWENTSNTKISMEKDGPEFTLKNLQPLTVYCVQARVLFRALLNKTSNFSEKLCEKTRPGSFSTIWIITGLGVVFFSVMVLYALRSVWKYLCHVCFPPLKPPRSIDEFFSEPPSKNLVLLTAEEHTERCFIIENTDTVAVEVKHAPEEDLRKYSSQTSQDSGNYSNEEEESVGTESGQAVLSKAPCGGPCSVPSPPGTLEDGTCFLGNEKYLQSPALRTEPALLC.

A signal peptide spans 1–26; it reads MLAVVGAAALVLVAGAPWVLPSAAGG. The Extracellular segment spans residues 27–429; the sequence is ENLKPPENID…EKTRPGSFST (403 aa). 4 Fibronectin type-III domains span residues 31-125, 127-226, 230-327, and 332-425; these read PPEN…PFYT, HMSP…TTVA, PVPG…FIDS, and LPPP…TRPG. Residue Asn43 is glycosylated (N-linked (GlcNAc...) asparagine). Cys78 and Cys86 form a disulfide bridge. Residues Asn109, Asn181, and Asn214 are each glycosylated (N-linked (GlcNAc...) asparagine). 2 disulfide bridges follow: Cys199–Cys220 and Cys284–Cys292. Asn314, Asn370, Asn409, and Asn413 each carry an N-linked (GlcNAc...) asparagine glycan. A disulfide bond links Cys397 and Cys419. The helical transmembrane segment at 430–449 threads the bilayer; sequence IWIITGLGVVFFSVMVLYAL. Residues 450 to 590 are Cytoplasmic-facing; the sequence is RSVWKYLCHV…ALRTEPALLC (141 aa). The important for interaction with TYK2 stretch occupies residues 483–492; the sequence is VLLTAEEHTE. The tract at residues 514–545 is disordered; sequence DLRKYSSQTSQDSGNYSNEEEESVGTESGQAV. Residue Lys517 forms a Glycyl lysine isopeptide (Lys-Gly) (interchain with G-Cter in ubiquitin) linkage. Positions 518 to 530 are enriched in polar residues; sequence YSSQTSQDSGNYS. Ser526 is modified (phosphoserine).

The protein belongs to the type II cytokine receptor family. In terms of assembly, heterodimer with IFNAR2; forming the receptor for type I interferon. Interacts with TYK2. Interacts with STAT1 and STAT2. Interacts (serine-phosphorylated form) with FBXW11, the substrate recognition component of a SCF (SKP1-CUL1-F-box protein) E3 ubiquitin-protein ligase complex. 3Interacts with SHMT2; this promotes interaction with ABRAXAS2 and the BRISC complex. Interacts with TRIM10; this interaction prevents association between IFNAR1 and TYK2. Post-translationally, ubiquitinated. This leads to its internalization and lysosomal degradation. The 'Lys-63'-linked ubiquitin chains are cleaved off by the BRISC complex; this prevents receptor internalization and degradation. Probable ubiquitination sites have been identified in human, but are poorly conserved across species. Phosphorylated on serine residues in response to interferon binding; this promotes interaction with FBXW11 and ubiquitination.

It localises to the cell membrane. Its subcellular location is the late endosome. The protein resides in the lysosome. Functionally, together with IFNAR2, forms the heterodimeric receptor for type I interferons (including interferons alpha, beta, epsilon, omega and kappa). Type I interferon binding activates the JAK-STAT signaling cascade, and triggers tyrosine phosphorylation of a number of proteins including JAKs, TYK2, STAT proteins and the IFNR alpha- and beta-subunits themselves. STAT proteins are then phosphorylated by the JAKs, promoting their translocation into the nucleus to regulate expression of interferon-regulated genes. Can also act independently of IFNAR2: form an active IFNB1 receptor by itself and activate a signaling cascade that does not involve activation of the JAK-STAT pathway. This is Interferon alpha/beta receptor 1 (Ifnar1) from Mus musculus (Mouse).